The primary structure comprises 196 residues: Pro-FMRFamide-related neuropeptide VF (196 aa).

Residues 1–21 (MEIISLKRFILLMLATSSLLT) form the signal peptide. A propeptide spanning residues 22–57 (SNIFCTDESRIPSLYSKKNYDKYSEPRGDLGWEKER) is cleaved from the precursor. Residue phenylalanine 92 is modified to Phenylalanine amide. Propeptides lie at residues 95-99 (NMEEE) and 115-121 (NREDSLS). Position 131 is a phenylalanine amide (phenylalanine 131). Positions 134-196 (TIAAKSITKT…IDDAELKQEK (63 aa)) are excised as a propeptide.

Belongs to the FARP (FMRFamide related peptide) family. Expressed in hypothalamus, where it is localized to the dorsomedial hypothalamic nucleus (DMH), paraventricular nucleus (PVN), and to neuronal projections from the PVN to the neurosecretory zone of the median eminence.

The protein localises to the secreted. In terms of biological role, may act in concert with kisspeptin, through opposing affects, to regulate the activity of gonadotropin-releasing hormone (GnRH) neurons across the seasons, leading to an annual change in fertility and the cyclical seasonal transition from non-breeding to breeding season. Efficiently inhibits forskolin-induced production of cAMP. Acts as a potent negative regulator of gonadotropin synthesis and secretion. Induces secretion of prolactin. Functionally, efficiently inhibits forskolin-induced production of cAMP. Blocks morphine-induced analgesia. Its function is as follows. Shows no inhibitory activity of forskolin-induced production of cAMP. The protein is Pro-FMRFamide-related neuropeptide VF of Ovis aries (Sheep).